The chain runs to 129 residues: Serum amyloid A-2 protein (129 aa).

The first 18 residues, Met-1–Ser-18, serve as a signal peptide directing secretion. Gln-19 bears the Pyrrolidone carboxylic acid mark. The span at Lys-90–Ala-103 shows a compositional bias: basic and acidic residues. Residues Lys-90–Tyr-129 are disordered.

The protein belongs to the SAA family. As to quaternary structure, apolipoprotein of the HDL complex.

The protein localises to the secreted. Functionally, major acute phase reactant. This chain is Serum amyloid A-2 protein, found in Sus scrofa (Pig).